We begin with the raw amino-acid sequence, 39 residues long: Cytochrome b6-f complex subunit 5 (39 aa).

Residues 5-25 form a helical membrane-spanning segment; sequence LLCGIVLGLVPVTLLGLFVSA.

Belongs to the PetG family. The 4 large subunits of the cytochrome b6-f complex are cytochrome b6, subunit IV (17 kDa polypeptide, PetD), cytochrome f and the Rieske protein, while the 4 small subunits are PetG, PetL, PetM and PetN. The complex functions as a dimer.

It localises to the cellular thylakoid membrane. Functionally, component of the cytochrome b6-f complex, which mediates electron transfer between photosystem II (PSII) and photosystem I (PSI), cyclic electron flow around PSI, and state transitions. PetG is required for either the stability or assembly of the cytochrome b6-f complex. The sequence is that of Cytochrome b6-f complex subunit 5 from Prochlorococcus marinus (strain NATL1A).